A 456-amino-acid chain; its full sequence is Probable serine/threonine-protein kinase DDB_G0277449 (456 aa).

Positions 50 to 83 (STSPTECEESSSSTITTPSEESLSSGEESSSISD) are enriched in low complexity. The interval 50 to 84 (STSPTECEESSSSTITTPSEESLSSGEESSSISDS) is disordered. The Protein kinase domain occupies 128-383 (FIIKHLVGKG…AIEIKRHPFF (256 aa)). ATP contacts are provided by residues 134–142 (VGKGGFGKV) and Lys157. The active-site Proton acceptor is the Asp251. The AGC-kinase C-terminal domain occupies 384–455 (KSIQWRKIEN…VRTPVLLESQ (72 aa)).

Belongs to the protein kinase superfamily. AGC Ser/Thr protein kinase family.

It carries out the reaction L-seryl-[protein] + ATP = O-phospho-L-seryl-[protein] + ADP + H(+). The enzyme catalyses L-threonyl-[protein] + ATP = O-phospho-L-threonyl-[protein] + ADP + H(+). This is Probable serine/threonine-protein kinase DDB_G0277449 from Dictyostelium discoideum (Social amoeba).